Reading from the N-terminus, the 262-residue chain is Hydroxyethylthiazole kinase (262 aa).

Met40 contributes to the substrate binding site. Positions 116 and 162 each coordinate ATP. Residue Gly189 coordinates substrate.

Belongs to the Thz kinase family. It depends on Mg(2+) as a cofactor.

It catalyses the reaction 5-(2-hydroxyethyl)-4-methylthiazole + ATP = 4-methyl-5-(2-phosphooxyethyl)-thiazole + ADP + H(+). The protein operates within cofactor biosynthesis; thiamine diphosphate biosynthesis; 4-methyl-5-(2-phosphoethyl)-thiazole from 5-(2-hydroxyethyl)-4-methylthiazole: step 1/1. Functionally, catalyzes the phosphorylation of the hydroxyl group of 4-methyl-5-beta-hydroxyethylthiazole (THZ). In Clostridioides difficile (strain 630) (Peptoclostridium difficile), this protein is Hydroxyethylthiazole kinase.